Reading from the N-terminus, the 308-residue chain is Ribosomal RNA small subunit methyltransferase A (308 aa).

Residues Asn35, Val37, Gly62, Glu83, Asp113, and Asn136 each coordinate S-adenosyl-L-methionine.

It belongs to the class I-like SAM-binding methyltransferase superfamily. rRNA adenine N(6)-methyltransferase family. RsmA subfamily.

It is found in the cytoplasm. It catalyses the reaction adenosine(1518)/adenosine(1519) in 16S rRNA + 4 S-adenosyl-L-methionine = N(6)-dimethyladenosine(1518)/N(6)-dimethyladenosine(1519) in 16S rRNA + 4 S-adenosyl-L-homocysteine + 4 H(+). Its function is as follows. Specifically dimethylates two adjacent adenosines (A1518 and A1519) in the loop of a conserved hairpin near the 3'-end of 16S rRNA in the 30S particle. May play a critical role in biogenesis of 30S subunits. The protein is Ribosomal RNA small subunit methyltransferase A of Bifidobacterium longum (strain NCC 2705).